The following is a 111-amino-acid chain: Cell division protein FtsB (111 aa).

At 1–3 (MRL) the chain is on the cytoplasmic side. The chain crosses the membrane as a helical span at residues 4 to 21 (LFLVLLVLLGLIQYPLWL). The Periplasmic portion of the chain corresponds to 22-111 (GKGGWFKVWD…PGQTASAPRR (90 aa)). A coiled-coil region spans residues 31–62 (DLQRQVAAQHETNDGLRARNAALEAEVRDLAT). Positions 88-111 (VPPGTPVPQPAPGAPGQTASAPRR) are disordered. The span at 90–100 (PGTPVPQPAPG) shows a compositional bias: pro residues. A compositionally biased stretch (low complexity) spans 101–111 (APGQTASAPRR).

It belongs to the FtsB family. As to quaternary structure, part of a complex composed of FtsB, FtsL and FtsQ.

It localises to the cell inner membrane. Its function is as follows. Essential cell division protein. May link together the upstream cell division proteins, which are predominantly cytoplasmic, with the downstream cell division proteins, which are predominantly periplasmic. This is Cell division protein FtsB from Bordetella petrii (strain ATCC BAA-461 / DSM 12804 / CCUG 43448).